The following is a 302-amino-acid chain: 4-hydroxy-tetrahydrodipicolinate synthase (302 aa).

Position 55 (threonine 55) interacts with pyruvate. Catalysis depends on tyrosine 144, which acts as the Proton donor/acceptor. The active-site Schiff-base intermediate with substrate is lysine 172. Pyruvate is bound at residue valine 214.

This sequence belongs to the DapA family. As to quaternary structure, homotetramer; dimer of dimers.

It is found in the cytoplasm. The enzyme catalyses L-aspartate 4-semialdehyde + pyruvate = (2S,4S)-4-hydroxy-2,3,4,5-tetrahydrodipicolinate + H2O + H(+). The protein operates within amino-acid biosynthesis; L-lysine biosynthesis via DAP pathway; (S)-tetrahydrodipicolinate from L-aspartate: step 3/4. Functionally, catalyzes the condensation of (S)-aspartate-beta-semialdehyde [(S)-ASA] and pyruvate to 4-hydroxy-tetrahydrodipicolinate (HTPA). This is 4-hydroxy-tetrahydrodipicolinate synthase from Prochlorococcus marinus (strain NATL2A).